The sequence spans 160 residues: Transcriptional regulator MraZ (160 aa).

SpoVT-AbrB domains follow at residues 5 to 50 (KFET…EGVY) and 93 to 136 (AIEC…SQAE).

It belongs to the MraZ family. Forms oligomers.

It localises to the cytoplasm. The protein resides in the nucleoid. This is Transcriptional regulator MraZ from Geotalea uraniireducens (strain Rf4) (Geobacter uraniireducens).